The sequence spans 380 residues: Glucose-1-phosphate adenylyltransferase (380 aa).

Residues Gly164, 179-180 (EK), and Ser190 each bind alpha-D-glucose 1-phosphate.

This sequence belongs to the bacterial/plant glucose-1-phosphate adenylyltransferase family. Homotetramer.

The catalysed reaction is alpha-D-glucose 1-phosphate + ATP + H(+) = ADP-alpha-D-glucose + diphosphate. Its pathway is glycan biosynthesis; glycogen biosynthesis. In terms of biological role, involved in the biosynthesis of ADP-glucose, a building block required for the elongation reactions to produce glycogen. Catalyzes the reaction between ATP and alpha-D-glucose 1-phosphate (G1P) to produce pyrophosphate and ADP-Glc. This Lacticaseibacillus casei (strain BL23) (Lactobacillus casei) protein is Glucose-1-phosphate adenylyltransferase.